A 205-amino-acid polypeptide reads, in one-letter code: Recombination protein RecR (205 aa).

Residues 60–75 form a C4-type zinc finger; sequence CKVCHNISDTETCQIC. The Toprim domain occupies 83-178; sequence SMVCVVENIR…KLSVLARGVS (96 aa).

Belongs to the RecR family.

Its function is as follows. May play a role in DNA repair. It seems to be involved in an RecBC-independent recombinational process of DNA repair. It may act with RecF and RecO. This chain is Recombination protein RecR, found in Bacteroides fragilis (strain ATCC 25285 / DSM 2151 / CCUG 4856 / JCM 11019 / LMG 10263 / NCTC 9343 / Onslow / VPI 2553 / EN-2).